The chain runs to 106 residues: Flagellar transcriptional regulator FlhD (106 aa).

This sequence belongs to the FlhD family. As to quaternary structure, homodimer; disulfide-linked. Forms a heterohexamer composed of two FlhC and four FlhD subunits. Each FlhC binds a FlhD dimer, forming a heterotrimer, and a hexamer assembles by dimerization of two heterotrimers.

It is found in the cytoplasm. In terms of biological role, functions in complex with FlhC as a master transcriptional regulator that regulates transcription of several flagellar and non-flagellar operons by binding to their promoter region. Activates expression of class 2 flagellar genes, including fliA, which is a flagellum-specific sigma factor that turns on the class 3 genes. Also regulates genes whose products function in a variety of physiological pathways. This is Flagellar transcriptional regulator FlhD from Burkholderia pseudomallei (strain 1710b).